Reading from the N-terminus, the 119-residue chain is MLRTALLGLLFITTAKAQFQFFEQMFGGGQQHQESSSQGGNVPSDSAWYQNTYNGAQCSNYLCPGTLACVAVPHHCPCAHPQVEDKFEFGEGSAICASKGGFKAGETARKIELARKGLL.

Residues 1–17 (MLRTALLGLLFITTAKA) form the signal peptide.

It belongs to the LCL2 family.

In terms of biological role, probable component of the endoplasmic reticulum-associated degradation (ERAD) pathway. In Arthroderma otae (strain ATCC MYA-4605 / CBS 113480) (Microsporum canis), this protein is Long chronological lifespan protein 2 (LCL2).